Consider the following 153-residue polypeptide: Probable inactive ribonuclease-like protein 13 (153 aa).

A signal peptide spans 1-22 (MASDAASLLVLQLVLQPTLVTG).

The protein belongs to the pancreatic ribonuclease family.

It is found in the secreted. Its function is as follows. Does not exhibit any ribonuclease activity. The protein is Probable inactive ribonuclease-like protein 13 (Rnase13) of Rattus norvegicus (Rat).